The chain runs to 254 residues: Tryptophan synthase alpha chain (254 aa).

Catalysis depends on proton acceptor residues Glu-48 and Asp-59.

Belongs to the TrpA family. In terms of assembly, tetramer of two alpha and two beta chains.

It carries out the reaction (1S,2R)-1-C-(indol-3-yl)glycerol 3-phosphate + L-serine = D-glyceraldehyde 3-phosphate + L-tryptophan + H2O. Its pathway is amino-acid biosynthesis; L-tryptophan biosynthesis; L-tryptophan from chorismate: step 5/5. In terms of biological role, the alpha subunit is responsible for the aldol cleavage of indoleglycerol phosphate to indole and glyceraldehyde 3-phosphate. The chain is Tryptophan synthase alpha chain from Desulfotalea psychrophila (strain LSv54 / DSM 12343).